Here is a 273-residue protein sequence, read N- to C-terminus: Large ribosomal subunit protein uL2 (273 aa).

The interval 221 to 273 is disordered; the sequence is RGTAMNPVDHPHGGGEGRNFGKHPVSPWGVQTKGKKTRHNKRTDKYIVRRRGK. Residues 253–273 show a composition bias toward basic residues; it reads KGKKTRHNKRTDKYIVRRRGK.

The protein belongs to the universal ribosomal protein uL2 family. As to quaternary structure, part of the 50S ribosomal subunit. Forms a bridge to the 30S subunit in the 70S ribosome.

In terms of biological role, one of the primary rRNA binding proteins. Required for association of the 30S and 50S subunits to form the 70S ribosome, for tRNA binding and peptide bond formation. It has been suggested to have peptidyltransferase activity; this is somewhat controversial. Makes several contacts with the 16S rRNA in the 70S ribosome. This chain is Large ribosomal subunit protein uL2, found in Mannheimia succiniciproducens (strain KCTC 0769BP / MBEL55E).